Here is a 914-residue protein sequence, read N- to C-terminus: PHD finger protein 14 (914 aa).

The tract at residues 19–276 is disordered; the sequence is DALDYDSSDD…EDSLLERPQT (258 aa). Positions 53–68 are enriched in low complexity; it reads ESAAGSESDSDAAAAS. The span at 90–102 shows a compositional bias: basic and acidic residues; that stretch reads EKVKESFSEETSS. 2 stretches are compositionally biased toward acidic residues: residues 155 to 168 and 191 to 233; these read ELNEMDDYDSEDDN and GEED…DSEE. The PHD-type 1 zinc finger occupies 285-346; the sequence is ILICCVCLGD…PWFCDACKNG (62 aa). Zn(2+) is bound by residues C288, C291, C305, C308, H313, C316, C340, C343, C351, C354, H371, C374, C407, C410, C424, C429, H434, C437, C461, and H464. The C2HC pre-PHD-type zinc finger occupies 348 to 381; sequence SPSCELCPSQDGIFKETDAGRWVHVVCALYVPGV. Residues 405 to 465 form a PHD-type 2 zinc finger; it reads KECSLCEDTR…PFFAYCKQHA (61 aa). Residues 596 to 644 are a coiled coil; the sequence is MIQIQDNIVEQKNLKDKLESEQEKLHMEYDKLCESLEDLQNVNGQLRTE. The PHD-type 3 zinc-finger motif lies at 692–746; sequence LYSCGICKKNQDQHLLLLCDTCKLHYHLGCLDPPLTRMPKKTKNSYWQCSECDQA. Zn(2+) contacts are provided by C695, C698, C710, C713, H718, C721, C740, and C743. The interval 777-838 is disordered; it reads PQEMSPEPKK…PKADDTRTEC (62 aa). Positions 792–802 are enriched in basic residues; it reads TRTRGQKRKRM. A compositionally biased stretch (basic and acidic residues) spans 803 to 817; that stretch reads SICEEEKMEEPLPRE. The PHD-type 4 zinc-finger motif lies at 835–888; that stretch reads RTECTTCKGPGDNENLVRCDECRLCYHFGCLDPPLKKSPKQTGYGWICQECDTS. Residues C838, C841, C853, C856, H861, C864, C882, and C885 each coordinate Zn(2+). A disordered region spans residues 887 to 914; that stretch reads TSSSKEEEAQEVEEESVNEETAEQEIPD. Residues 894–914 show a composition bias toward acidic residues; that stretch reads EAQEVEEESVNEETAEQEIPD.

As to quaternary structure, interacts with histone H3.

Its subcellular location is the nucleus. Functionally, histone-binding protein. Binds preferentially to unmodified histone H3 but can also bind to a lesser extent to histone H3 trimethylated at 'Lys-9' (H3K9me3) as well as to histone H3 monomethylated at 'Lys-27' (H3K27ac) and trimethylated at 'Lys-27' (H3K27me3). Represses PDGFRA expression, thus playing a role in regulation of mesenchymal cell proliferation. The sequence is that of PHD finger protein 14 from Danio rerio (Zebrafish).